Consider the following 331-residue polypeptide: Anthranilate phosphoribosyltransferase (331 aa).

5-phospho-alpha-D-ribose 1-diphosphate is bound by residues Gly79, 82 to 83 (GD), Ser87, 89 to 92 (NIST), 107 to 115 (KHCNSSISG), and Ser119. Gly79 contributes to the anthranilate binding site. Residue Ser91 participates in Mg(2+) binding. An anthranilate-binding site is contributed by Asn110. Anthranilate is bound at residue Arg165. Residues Asp223 and Glu224 each coordinate Mg(2+).

The protein belongs to the anthranilate phosphoribosyltransferase family. In terms of assembly, homodimer. The cofactor is Mg(2+).

It carries out the reaction N-(5-phospho-beta-D-ribosyl)anthranilate + diphosphate = 5-phospho-alpha-D-ribose 1-diphosphate + anthranilate. It functions in the pathway amino-acid biosynthesis; L-tryptophan biosynthesis; L-tryptophan from chorismate: step 2/5. Its function is as follows. Catalyzes the transfer of the phosphoribosyl group of 5-phosphorylribose-1-pyrophosphate (PRPP) to anthranilate to yield N-(5'-phosphoribosyl)-anthranilate (PRA). The chain is Anthranilate phosphoribosyltransferase from Buchnera aphidicola subsp. Melaphis rhois.